Reading from the N-terminus, the 176-residue chain is 2-C-methyl-D-erythritol 2,4-cyclodiphosphate synthase (176 aa).

A divalent metal cation contacts are provided by aspartate 23, histidine 25, and histidine 60. 23–25 (DSH) contributes to the 4-CDP-2-C-methyl-D-erythritol 2-phosphate binding site. 149–152 (TSGE) provides a ligand contact to 4-CDP-2-C-methyl-D-erythritol 2-phosphate.

Belongs to the IspF family. In terms of assembly, homotrimer. A divalent metal cation serves as cofactor.

It carries out the reaction 4-CDP-2-C-methyl-D-erythritol 2-phosphate = 2-C-methyl-D-erythritol 2,4-cyclic diphosphate + CMP. It functions in the pathway isoprenoid biosynthesis; isopentenyl diphosphate biosynthesis via DXP pathway; isopentenyl diphosphate from 1-deoxy-D-xylulose 5-phosphate: step 4/6. Involved in the biosynthesis of isopentenyl diphosphate (IPP) and dimethylallyl diphosphate (DMAPP), two major building blocks of isoprenoid compounds. Catalyzes the conversion of 4-diphosphocytidyl-2-C-methyl-D-erythritol 2-phosphate (CDP-ME2P) to 2-C-methyl-D-erythritol 2,4-cyclodiphosphate (ME-CPP) with a corresponding release of cytidine 5-monophosphate (CMP). In Chlamydia felis (strain Fe/C-56) (Chlamydophila felis), this protein is 2-C-methyl-D-erythritol 2,4-cyclodiphosphate synthase.